Here is a 156-residue protein sequence, read N- to C-terminus: Small ribosomal subunit protein uS7c (156 aa).

It belongs to the universal ribosomal protein uS7 family. Part of the 30S ribosomal subunit.

Its subcellular location is the plastid. It localises to the chloroplast. One of the primary rRNA binding proteins, it binds directly to 16S rRNA where it nucleates assembly of the head domain of the 30S subunit. This Thalassiosira pseudonana (Marine diatom) protein is Small ribosomal subunit protein uS7c (rps7).